We begin with the raw amino-acid sequence, 314 residues long: Bis(5'-nucleosyl)-tetraphosphatase, symmetrical (314 aa).

The segment at 267–314 is disordered; that stretch reads QVPGNPITHPPKTAQRPRQPRRRQRQRGGDQAQTGPAPTPASTGPAGG. Residues 297 to 314 are compositionally biased toward low complexity; the sequence is QAQTGPAPTPASTGPAGG.

This sequence belongs to the Ap4A hydrolase family.

The catalysed reaction is P(1),P(4)-bis(5'-adenosyl) tetraphosphate + H2O = 2 ADP + 2 H(+). Functionally, hydrolyzes diadenosine 5',5'''-P1,P4-tetraphosphate to yield ADP. This Xanthomonas axonopodis pv. citri (strain 306) protein is Bis(5'-nucleosyl)-tetraphosphatase, symmetrical.